The primary structure comprises 422 residues: Tyrosine--tRNA ligase (422 aa).

Y35 contributes to the L-tyrosine binding site. The 'HIGH' region motif lies at 40–49 (PTAPSLHLGN). L-tyrosine contacts are provided by Y170 and Q174. The 'KMSKS' region signature appears at 231-235 (KFGKT). K234 serves as a coordination point for ATP. In terms of domain architecture, S4 RNA-binding spans 353-419 (APVVDLFAEV…GKKNLAAVEV (67 aa)).

This sequence belongs to the class-I aminoacyl-tRNA synthetase family. TyrS type 1 subfamily. As to quaternary structure, homodimer.

It is found in the cytoplasm. It catalyses the reaction tRNA(Tyr) + L-tyrosine + ATP = L-tyrosyl-tRNA(Tyr) + AMP + diphosphate + H(+). Catalyzes the attachment of tyrosine to tRNA(Tyr) in a two-step reaction: tyrosine is first activated by ATP to form Tyr-AMP and then transferred to the acceptor end of tRNA(Tyr). This is Tyrosine--tRNA ligase from Streptomyces avermitilis (strain ATCC 31267 / DSM 46492 / JCM 5070 / NBRC 14893 / NCIMB 12804 / NRRL 8165 / MA-4680).